The chain runs to 280 residues: 2,3,4,5-tetrahydropyridine-2,6-dicarboxylate N-succinyltransferase (280 aa).

2 residues coordinate substrate: Arg-107 and Asp-144.

The protein belongs to the transferase hexapeptide repeat family. In terms of assembly, homotrimer.

Its subcellular location is the cytoplasm. It carries out the reaction (S)-2,3,4,5-tetrahydrodipicolinate + succinyl-CoA + H2O = (S)-2-succinylamino-6-oxoheptanedioate + CoA. Its pathway is amino-acid biosynthesis; L-lysine biosynthesis via DAP pathway; LL-2,6-diaminopimelate from (S)-tetrahydrodipicolinate (succinylase route): step 1/3. This Paramagnetospirillum magneticum (strain ATCC 700264 / AMB-1) (Magnetospirillum magneticum) protein is 2,3,4,5-tetrahydropyridine-2,6-dicarboxylate N-succinyltransferase.